The chain runs to 319 residues: Ribonuclease Z (319 aa).

7 residues coordinate Zn(2+): histidine 62, histidine 64, aspartate 66, histidine 67, histidine 145, aspartate 216, and histidine 274. Catalysis depends on aspartate 66, which acts as the Proton acceptor.

This sequence belongs to the RNase Z family. As to quaternary structure, homodimer. Requires Zn(2+) as cofactor.

It carries out the reaction Endonucleolytic cleavage of RNA, removing extra 3' nucleotides from tRNA precursor, generating 3' termini of tRNAs. A 3'-hydroxy group is left at the tRNA terminus and a 5'-phosphoryl group is left at the trailer molecule.. Zinc phosphodiesterase, which displays some tRNA 3'-processing endonuclease activity. Probably involved in tRNA maturation, by removing a 3'-trailer from precursor tRNA. The chain is Ribonuclease Z from Parasynechococcus marenigrum (strain WH8102).